We begin with the raw amino-acid sequence, 147 residues long: Ribonuclease 4 (147 aa).

Residues 1-28 (MALQRTQAFLLLLLLTLLGLGLVQPSYG) form the signal peptide. Residue Q29 is modified to Pyrrolidone carboxylic acid. Residues R35, H40, K68, N71, and T72 each coordinate dUMP. Residue H40 is the Proton acceptor of the active site. Cystine bridges form between C53/C109, C67/C120, C85/C135, and C92/C99. The active-site Proton donor is the H144. A dUMP-binding site is contributed by F145.

It belongs to the pancreatic ribonuclease family.

It localises to the secreted. Functionally, cleaves preferentially after uridine bases. Has antimicrobial activity against uropathogenic E.coli (UPEC). Probably contributes to urinary tract sterility. This is Ribonuclease 4 (RNASE4) from Bos taurus (Bovine).